A 119-amino-acid chain; its full sequence is Large ribosomal subunit protein bL20 (119 aa).

The protein belongs to the bacterial ribosomal protein bL20 family.

Its function is as follows. Binds directly to 23S ribosomal RNA and is necessary for the in vitro assembly process of the 50S ribosomal subunit. It is not involved in the protein synthesizing functions of that subunit. This chain is Large ribosomal subunit protein bL20, found in Bradyrhizobium sp. (strain BTAi1 / ATCC BAA-1182).